The sequence spans 310 residues: Peroxidase 44 (310 aa).

The N-terminal stretch at 1-20 (MRSITALFFLFCFLAPSALA) is a signal peptide. Cystine bridges form between Cys31–Cys110, Cys64–Cys69, Cys116–Cys305, and Cys194–Cys218. The active-site Proton acceptor is His62. Residues Asp63, Val66, Gly68, Asp70, and Ser72 each coordinate Ca(2+). Pro156 lines the substrate pocket. His187 contacts heme b. Ser188 contributes to the Ca(2+) binding site. Residues Asp229, Thr232, and Asp237 each coordinate Ca(2+).

It belongs to the peroxidase family. Classical plant (class III) peroxidase subfamily. Requires heme b as cofactor. Ca(2+) serves as cofactor.

The protein localises to the secreted. It catalyses the reaction 2 a phenolic donor + H2O2 = 2 a phenolic radical donor + 2 H2O. Its function is as follows. Removal of H(2)O(2), oxidation of toxic reductants, biosynthesis and degradation of lignin, suberization, auxin catabolism, response to environmental stresses such as wounding, pathogen attack and oxidative stress. These functions might be dependent on each isozyme/isoform in each plant tissue. This chain is Peroxidase 44 (PER44), found in Arabidopsis thaliana (Mouse-ear cress).